The primary structure comprises 269 residues: Magnetosome protein MamX (269 aa).

Residues 1–10 (MNTKAVAHPD) are Cytoplasmic-facing. A helical membrane pass occupies residues 11-31 (IAVWIMALGIAFSMALVLTAL). The Lumenal segment spans residues 32-269 (FNANPWEDHT…NVGGVDAEER (238 aa)). The MCR (magnetochrome) 1 motif lies at 48-71 (IVAGMAAPHRDGREKMVCSSCHIV). Residues C65, C68, H69, C104, C107, and H108 each coordinate heme. An MCR 2 motif is present at residues 87–110 (IVEGTPAPHVDGREKMACASCHTI).

This sequence belongs to the magnetosome MamX family. As to quaternary structure, probably interacts with FtsZ-like and MamY proteins. It depends on heme as a cofactor.

The protein resides in the magnetosome membrane. Its function is as follows. Required for correct biomineralization of the magnetosome, maybe via redox control. May function with MamY, MamZ amd Mms6 in biomineralization. The protein is Magnetosome protein MamX of Magnetospirillum gryphiswaldense (strain DSM 6361 / JCM 21280 / NBRC 15271 / MSR-1).